Reading from the N-terminus, the 827-residue chain is Villin-1 (827 aa).

Residues M1–M126 form a necessary for homodimerization region. The interval M1–N734 is core. Residues M27 to G76 form a Gelsolin-like 1 repeat. LPA/PIP2-binding site stretches follow at residues K112–K119 and R138–R146. 2 Gelsolin-like repeats span residues V148–L188 and V265–K309. S366 is modified (phosphoserine). Gelsolin-like repeat units lie at residues N407–T457, T528–E568, and F631–K672. Position 735 is a phosphoserine (S735). The tract at residues S735–F827 is headpiece. Residues S761–F827 form the HP domain. Residues K816–K824 are LPA/PIP2-binding site 3.

This sequence belongs to the villin/gelsolin family. Monomer. Homodimer; homodimerization is necessary for actin-bundling. Associates with F-actin; phosphorylation at tyrosine residues decreases the association with F-actin. Interacts (phosphorylated at C-terminus tyrosine phosphorylation sites) with PLCG1 (via the SH2 domains). Interacts (phosphorylated form) with PLCG1; the interaction is enhanced by hepatocyte growth factor (HGF). In terms of processing, phosphorylated on tyrosine residues by SRC. The unphosphorylated form increases the initial rate of actin-nucleating activity, whereas the tyrosine-phosphorylated form inhibits actin-nucleating activity, enhances actin-bundling activity and enhances actin-severing activity by reducing high Ca(2+) requirements. The tyrosine-phosphorylated form does not regulate actin-capping activity. Tyrosine phosphorylation is essential for cell migration: tyrosine phosphorylation sites in the N-terminus half regulate actin reorganization and cell morphology, whereas tyrosine phosphorylation sites in the C-terminus half regulate cell migration via interaction with PLCG1. Tyrosine phosphorylation is induced by epidermal growth factor (EGF) and stimulates cell migration.

It localises to the cytoplasm. The protein localises to the cytoskeleton. Its subcellular location is the cell projection. It is found in the lamellipodium. The protein resides in the ruffle. It localises to the microvillus. The protein localises to the filopodium tip. Its subcellular location is the filopodium. In terms of biological role, epithelial cell-specific Ca(2+)-regulated actin-modifying protein that modulates the reorganization of microvillar actin filaments. Plays a role in the actin nucleation, actin filament bundle assembly, actin filament capping and severing. Binds phosphatidylinositol 4,5-bisphosphate (PIP2) and lysophosphatidic acid (LPA); binds LPA with higher affinity than PIP2. Binding to LPA increases its phosphorylation by SRC and inhibits all actin-modifying activities. Binding to PIP2 inhibits actin-capping and -severing activities but enhances actin-bundling activity. Regulates the intestinal epithelial cell morphology, cell invasion, cell migration and apoptosis. Protects against apoptosis induced by dextran sodium sulfate (DSS) in the gastrointestinal epithelium. Appears to regulate cell death by maintaining mitochondrial integrity. Enhances hepatocyte growth factor (HGF)-induced epithelial cell motility, chemotaxis and wound repair. This chain is Villin-1 (VIL1), found in Bos taurus (Bovine).